The primary structure comprises 260 residues: UPF0246 protein BceJ2315_22780 (260 aa).

The protein belongs to the UPF0246 family.

This is UPF0246 protein BceJ2315_22780 from Burkholderia cenocepacia (strain ATCC BAA-245 / DSM 16553 / LMG 16656 / NCTC 13227 / J2315 / CF5610) (Burkholderia cepacia (strain J2315)).